The primary structure comprises 435 residues: Putative magnesium transporter MRS2-H (435 aa).

Residues 19 to 54 are disordered; that stretch reads FSSSPESRRCRSVHRVPSRPRPPLAPPARVMGKGNS. The next 2 membrane-spanning stretches (helical) occupy residues 369–389 and 408–428; these read LTLI…AAFA and FVGA…TYAW.

This sequence belongs to the CorA metal ion transporter (MIT) (TC 1.A.35.5) family.

Its subcellular location is the membrane. In terms of biological role, putative magnesium transporter. This chain is Putative magnesium transporter MRS2-H (MRS2-H), found in Oryza sativa subsp. indica (Rice).